The following is a 179-amino-acid chain: UPF0227 protein Swoo_1808 (179 aa).

It belongs to the UPF0227 family.

The sequence is that of UPF0227 protein Swoo_1808 from Shewanella woodyi (strain ATCC 51908 / MS32).